The following is a 113-amino-acid chain: Hydrogenase maturation factor HybF (113 aa).

His-2 and Glu-3 together coordinate Ni(2+). Residues Cys-73, Cys-76, Cys-89, and Cys-92 each contribute to the Zn(2+) site.

Belongs to the HypA/HybF family. HybF subfamily.

Involved in the maturation of [NiFe] hydrogenases. Required for nickel insertion into the metal center of the hydrogenase. The sequence is that of Hydrogenase maturation factor HybF from Morganella morganii (Proteus morganii).